The sequence spans 353 residues: Probable dual-specificity RNA methyltransferase RlmN (353 aa).

Catalysis depends on Glu104, which acts as the Proton acceptor. The region spanning 112–341 (DGGRKTICIS…ILNRRSPGKD (230 aa)) is the Radical SAM core domain. A disulfide bridge links Cys119 with Cys346. Cys126, Cys130, and Cys133 together coordinate [4Fe-4S] cluster. Residues 173–174 (GE), Ser205, 228–230 (SLN), and Asn304 contribute to the S-adenosyl-L-methionine site. The S-methylcysteine intermediate role is filled by Cys346.

It belongs to the radical SAM superfamily. RlmN family. Requires [4Fe-4S] cluster as cofactor.

The protein localises to the cytoplasm. The catalysed reaction is adenosine(2503) in 23S rRNA + 2 reduced [2Fe-2S]-[ferredoxin] + 2 S-adenosyl-L-methionine = 2-methyladenosine(2503) in 23S rRNA + 5'-deoxyadenosine + L-methionine + 2 oxidized [2Fe-2S]-[ferredoxin] + S-adenosyl-L-homocysteine. It carries out the reaction adenosine(37) in tRNA + 2 reduced [2Fe-2S]-[ferredoxin] + 2 S-adenosyl-L-methionine = 2-methyladenosine(37) in tRNA + 5'-deoxyadenosine + L-methionine + 2 oxidized [2Fe-2S]-[ferredoxin] + S-adenosyl-L-homocysteine. Its function is as follows. Specifically methylates position 2 of adenine 2503 in 23S rRNA and position 2 of adenine 37 in tRNAs. The chain is Probable dual-specificity RNA methyltransferase RlmN from Leptospira interrogans serogroup Icterohaemorrhagiae serovar copenhageni (strain Fiocruz L1-130).